We begin with the raw amino-acid sequence, 304 residues long: Peroxisome biogenesis factor 2 (304 aa).

The Peroxisomal matrix portion of the chain corresponds to 1-14 (MAGREKTKSANRVL). A helical transmembrane segment spans residues 15 to 41 (RISQLDALELNKALEQLVWSQFTQCFH). At 42 to 47 (GFKPGL) the chain is on the cytoplasmic side. Residues 48-73 (LARFEPEVKACLWLFLWRFTIYSKNA) traverse the membrane as a helical segment. Residues 74–97 (TVGQSVLNIQYKNDFSSNSRYQPP) are Peroxisomal matrix-facing. The chain crosses the membrane as a helical span at residues 98 to 124 (SKNQKLWYAVCTIGGRWLEERCYDLFR). The Cytoplasmic segment spans residues 125 to 132 (NRHLASFG). Residues 133–159 (KVKQCMNVMVGLLKLGELINFLIFLQK) form a helical membrane-spanning segment. Topologically, residues 160 to 186 (GKFATLTERLLGIHSVFCKPQNIREVG) are peroxisomal matrix. A helical membrane pass occupies residues 187 to 210 (FDYMNRELLWHGFAEFLIFLLPLI). Topologically, residues 211-304 (NIQKFKAKLS…GIEMSEVNAL (94 aa)) are cytoplasmic. Residues Cys-243, Cys-246, Cys-258, His-260, Cys-263, Cys-266, Cys-279, and Cys-282 each contribute to the Zn(2+) site. An RING-type zinc finger spans residues 243–283 (CALCGEWPTMPHTIGCEHVFCYYCVKSSFLFDMYFTCPKCG).

The protein belongs to the pex2/pex10/pex12 family. As to quaternary structure, component of the PEX2-PEX10-PEX12 retrotranslocation channel, composed of PEX2, PEX10 and PEX12. Forms intramolecular and intermolecular disulfide bonds in response to reactive oxygen species (ROS), promoting higher stability.

It localises to the peroxisome membrane. It catalyses the reaction [E2 ubiquitin-conjugating enzyme]-S-ubiquitinyl-L-cysteine + [acceptor protein]-L-cysteine = [E2 ubiquitin-conjugating enzyme]-L-cysteine + [acceptor protein]-S-ubiquitinyl-L-cysteine.. The enzyme catalyses S-ubiquitinyl-[E2 ubiquitin-conjugating enzyme]-L-cysteine + [acceptor protein]-L-lysine = [E2 ubiquitin-conjugating enzyme]-L-cysteine + N(6)-ubiquitinyl-[acceptor protein]-L-lysine.. The protein operates within protein modification; protein ubiquitination. In terms of biological role, E3 ubiquitin-protein ligase component of a retrotranslocation channel required for peroxisome organization by mediating export of the PEX5 receptor from peroxisomes to the cytosol, thereby promoting PEX5 recycling. The retrotranslocation channel is composed of PEX2, PEX10 and PEX12; each subunit contributing transmembrane segments that coassemble into an open channel that specifically allows the passage of PEX5 through the peroxisomal membrane. PEX2 also regulates peroxisome organization by acting as a E3 ubiquitin-protein ligase. PEX2 ubiquitinates PEX5 during its passage through the retrotranslocation channel: catalyzes monoubiquitination of PEX5 at 'Cys-11', a modification that acts as a signal for PEX5 extraction into the cytosol. Required for pexophagy in response to starvation by mediating ubiquitination of peroxisomal proteins, such as PEX5 and ABCD3/PMP70. Also involved in the response to reactive oxygen species (ROS) by mediating 'Lys-48'-linked polyubiquitination and subsequent degradation of PNPLA2/ATGL, thereby regulating lipolysis. The protein is Peroxisome biogenesis factor 2 (PEX2) of Cricetulus griseus (Chinese hamster).